The sequence spans 279 residues: Small ribosomal subunit protein uS2 (279 aa).

The protein belongs to the universal ribosomal protein uS2 family. As to quaternary structure, component of the small ribosomal subunit. Mature ribosomes consist of a small (40S) and a large (60S) subunit. The 40S subunit contains about 33 different proteins and 1 molecule of RNA (18S). The 60S subunit contains about 49 different proteins and 3 molecules of RNA (28S, 5.8S and 5S). Interacts with ribosomal protein S21.

The protein resides in the cytoplasm. In terms of biological role, required for the assembly and/or stability of the 40S ribosomal subunit. Required for the processing of the 20S rRNA-precursor to mature 18S rRNA in a late step of the maturation of 40S ribosomal subunits. This Schistosoma japonicum (Blood fluke) protein is Small ribosomal subunit protein uS2.